A 206-amino-acid polypeptide reads, in one-letter code: Large ribosomal subunit protein eL8 (206 aa).

The protein belongs to the eukaryotic ribosomal protein eL8 family. Component of the large ribosomal subunit.

Its subcellular location is the cytoplasm. The chain is Large ribosomal subunit protein eL8 (RPL7A) from Encephalitozoon cuniculi (strain GB-M1) (Microsporidian parasite).